Reading from the N-terminus, the 251-residue chain is Flagellar brake protein YcgR (251 aa).

The region spanning 127–239 (QRRDGFRVRP…ASRTLQRYID (113 aa)) is the PilZ domain.

The protein belongs to the YcgR family. In terms of assembly, monomer. Interacts with the flagellar basal bodies.

The protein localises to the bacterial flagellum basal body. Acts as a flagellar brake, regulating swimming and swarming in a bis-(3'-5') cyclic diguanylic acid (c-di-GMP)-dependent manner. Binds 1 c-di-GMP dimer per subunit. Increasing levels of c-di-GMP lead to decreased motility. The polypeptide is Flagellar brake protein YcgR (Leptothrix cholodnii (strain ATCC 51168 / LMG 8142 / SP-6) (Leptothrix discophora (strain SP-6))).